We begin with the raw amino-acid sequence, 465 residues long: VGFKAGVKDYKLTYYTPNYETKDTDILAAFRVTPQPGVPPEEAGAAVAAESSTGTWTTVWTDGLTSLDRYKGRCYHIEPVPGDENQYIAYVAYPLDLFEEGSVTNMFTSIVGNVFGFKALRALRLEDLRIPAAYAKTFQGPPHGIQVERDKLNKYGRPLLGCTIKPKLGLSAKNYGRAVYECLRGGLDFTKDDENVNSQPFMRWRDRFLFCAEAIYKAQAETGEIKGHYLNATAGTCEEMMKRAVFARELGVPIVMHDYLTGGFTANTSLAEYCRDNGLLLHIHRAMHAVIDRQKNHGIHFRVLAKALRMSGGDHIHAGTVVGKLEGEREITLGFVDLLRDDYIEKDRGRGIYFSQDWVSLPGVLPVASGGIHVWHMPALTEIFGDDSVLQFGGGTLGHPWGNAPGAVANRVALEACVQARNEGRDLAREGNEIIREAGQWSNELSAACAIWKEIKFEFPAMDTL.

K4 is modified (N6,N6,N6-trimethyllysine). The substrate site is built by N113 and T163. The Proton acceptor role is filled by K165. K167 is a binding site for substrate. Positions 191, 193, and 194 each coordinate Mg(2+). K191 is subject to N6-carboxylysine. Catalysis depends on H284, which acts as the Proton acceptor. Substrate contacts are provided by R285, H317, and S369.

This sequence belongs to the RuBisCO large chain family. Type I subfamily. Heterohexadecamer of 8 large chains and 8 small chains; disulfide-linked. The disulfide link is formed within the large subunit homodimers. Mg(2+) serves as cofactor. Post-translationally, the disulfide bond which can form in the large chain dimeric partners within the hexadecamer appears to be associated with oxidative stress and protein turnover.

The protein localises to the plastid. Its subcellular location is the chloroplast. The enzyme catalyses 2 (2R)-3-phosphoglycerate + 2 H(+) = D-ribulose 1,5-bisphosphate + CO2 + H2O. It catalyses the reaction D-ribulose 1,5-bisphosphate + O2 = 2-phosphoglycolate + (2R)-3-phosphoglycerate + 2 H(+). Functionally, ruBisCO catalyzes two reactions: the carboxylation of D-ribulose 1,5-bisphosphate, the primary event in carbon dioxide fixation, as well as the oxidative fragmentation of the pentose substrate in the photorespiration process. Both reactions occur simultaneously and in competition at the same active site. The chain is Ribulose bisphosphate carboxylase large chain from Epacris sp.